The following is a 480-amino-acid chain: Serine carboxypeptidase-like 35 (480 aa).

The N-terminal stretch at 1-20 is a signal peptide; it reads MKKNALWLLCILVLPAIACG. Residues Asn-79 and Asn-146 are each glycosylated (N-linked (GlcNAc...) asparagine). 3 disulfides stabilise this stretch: Cys-95–Cys-363, Cys-257–Cys-270, and Cys-294–Cys-331. Residue Ser-188 is part of the active site. A glycan (N-linked (GlcNAc...) asparagine) is linked at Asn-265. N-linked (GlcNAc...) asparagine glycosylation is present at Asn-352. Residues Asp-399 and His-452 contribute to the active site.

The protein belongs to the peptidase S10 family. As to expression, expressed in seedlings, flowers and siliques.

The protein resides in the secreted. In terms of biological role, probable carboxypeptidase. The sequence is that of Serine carboxypeptidase-like 35 (SCPL35) from Arabidopsis thaliana (Mouse-ear cress).